The primary structure comprises 981 residues: Rab3 GTPase-activating protein catalytic subunit (981 aa).

A phosphoserine mark is found at Ser83, Ser379, Ser536, Ser579, Ser581, and Ser590. Residues 532 to 558 form a disordered region; it reads GKKTSLSDSTTSAYPGDAGKTGGQLGL. The segment at 591–614 is disordered; that stretch reads DTEDLKGNGQESGKKGGPKEMANL. At Ser664 the chain carries Phosphoserine.

Belongs to the Rab3-GAP catalytic subunit family. As to quaternary structure, the Rab3 GTPase-activating complex is a heterodimer composed of Rab3gap1 and Rab3gap2. The Rab3 GTPase-activating complex interacts with DMXL2. Interacts with LMAN1. As to expression, in the eye, it is highly expressed within the lens, particularly in the anterior lens epithelium and in a ring corresponding to the equatorial region where anterior cells are differentiating into lens fibers. Also highly expressed in the retina.

The protein resides in the cytoplasm. It is found in the endoplasmic reticulum. It localises to the golgi apparatus. The protein localises to the cis-Golgi network. In terms of biological role, catalytic subunit of the Rab3 GTPase-activating (Rab3GAP) complex composed of RAB3GAP1 and RAB3GAP2, which has GTPase-activating protein (GAP) activity towards various Rab3 subfamily members (RAB3A, RAB3B, RAB3C and RAB3D), RAB5A and RAB43, and guanine nucleotide exchange factor (GEF) activity towards RAB18. As part of the Rab3GAP complex, acts as a GAP for Rab3 proteins by converting active RAB3-GTP to the inactive form RAB3-GDP. Rab3 proteins are involved in regulated exocytosis of neurotransmitters and hormones. The Rab3GAP complex, acts as a GEF for RAB18 by promoting the conversion of inactive RAB18-GDP to the active form RAB18-GTP. Recruits and stabilizes RAB18 at the cis-Golgi membrane where RAB18 is most likely activated. Also involved in RAB18 recruitment at the endoplasmic reticulum (ER) membrane where it maintains proper ER structure. Required for normal eye and brain development. May participate in neurodevelopmental processes such as proliferation, migration and differentiation before synapse formation, and non-synaptic vesicular release of neurotransmitters. The chain is Rab3 GTPase-activating protein catalytic subunit from Mus musculus (Mouse).